The chain runs to 1279 residues: Sterol regulatory element-binding protein cleavage-activating protein (1279 aa).

The Cytoplasmic portion of the chain corresponds to 1 to 18; the sequence is MTLTERLREKISQAFYNH. The helical transmembrane segment at 19 to 39 threads the bilayer; it reads GLLCASYPIPIILFTGLCILA. The Lumenal segment spans residues 40–279; sequence CCYPLLKLPL…SLVHVHFKEE (240 aa). The loop-1 stretch occupies residues 46–284; the sequence is KLPLPGTGPV…HFKEEIGIAE (239 aa). Positions 60 to 81 are disordered; it reads PVKDYSPPPSASDHKPGEPSEQ. N-linked (GlcNAc...) asparagine glycosylation is present at N263. The helical transmembrane segment at 280 to 300 threads the bilayer; it reads IGIAELIPLVTTYIILFAYIY. The region spanning 284–442 is the SSD domain; the sequence is ELIPLVTTYI…MPFFTTVLSI (159 aa). Topologically, residues 301–312 are cytoplasmic; it reads FSTRKIDMVKSK. A helical transmembrane segment spans residues 313–333; that stretch reads WGLALAAVVTVLSSLLMSVGL. The Lumenal portion of the chain corresponds to 334-344; that stretch reads CTLFGLTPTLN. A helical membrane pass occupies residues 345-365; the sequence is GGEIFPYLVVVIGLENVLVLT. Topologically, residues 366 to 401 are cytoplasmic; the sequence is KSVVSTPVDLEVKLRIAQGLSSESWSIMKNMATELG. The chain crosses the membrane as a helical span at residues 402–422; the sequence is IILIGYFTLVPAIQEFCLFAV. Residue V423 is a topological domain, lumenal. The chain crosses the membrane as a helical span at residues 424 to 444; sequence GLVSDFFLQMPFFTTVLSIDI. Residues 445 to 518 are Cytoplasmic-facing; sequence RRMELADLNK…FLARTRLAQR (74 aa). The short motif at 447-452 is the ER export signal element; sequence MELADL. Residues K454 and K466 each participate in a glycyl lysine isopeptide (Lys-Gly) (interchain with G-Cter in ubiquitin) cross-link. Residues 519–539 form a helical membrane-spanning segment; that stretch reads LIMAGTVVWIGILAYTDPAGL. The interval 535-710 is loop-7; that stretch reads DPAGLRTYLA…QAHRDVTLYK (176 aa). The Lumenal segment spans residues 540–707; sequence RTYLAAQVTE…GVAQAHRDVT (168 aa). The tract at residues 588 to 617 is disordered; the sequence is LENQTLPGEPPEPGGQAEGVHDSPAPEVTW. 2 N-linked (GlcNAc...) asparagine glycosylation sites follow: N590 and N641. Residues 668 to 696 form a disordered region; sequence EGRHPQDSRSAWSPPQPAQGGLWDAGPKG. A helical transmembrane segment spans residues 708 to 728; that stretch reads LYKVAALGLATGILLVLLLCL. Topologically, residues 729 to 1279 are cytoplasmic; the sequence is YRVLCPRNYG…YVPSVLEKLD (551 aa). The interaction with SREBF2 stretch occupies residues 730 to 1279; the sequence is RVLCPRNYGQ…YVPSVLEKLD (550 aa). One copy of the WD 1 repeat lies at 770 to 810; that stretch reads VLRGHLMDIECLASDGMLLVSCCLAGHVCVWDAQTGDCLTR. Phosphoserine is present on residues S821, S837, S843, and S850. Disordered stretches follow at residues 834–868, 883–903, and 925–959; these read ERLS…LFGD, HPRL…CRRT, and VPMH…GSPS. Positions 885–896 are enriched in basic and acidic residues; that stretch reads RLPELDHPEPRH. The span at 929-944 shows a compositional bias: pro residues; the sequence is TPAPRPPSPGPTPPQT. S936 carries the post-translational modification Phosphoserine. WD repeat units follow at residues 952–1002 and 1005–1042; these read PPEK…LRCS and EVAS…ALSP. At R1051 the chain carries Omega-N-methylarginine. 4 WD repeats span residues 1077–1114, 1117–1155, 1158–1195, and 1197–1235; these read AHQK…CLFT, GHSG…RVSH, AHRG…KLYS, and QQDL…LLQT.

The protein belongs to the WD repeat SCAP family. In terms of assembly, membrane region forms a homotetramer. Component of the SCAP-SREBP complex (composed of SCAP and SREBF1/SREBP1 or SREBF2/SREBP2); interacts with SREBF1/SREBP1 or SREBF2/SREBP2 through its C-terminal cytoplasmic domain. Forms a ternary complex with INSIG1 or INSIG2 through its transmembrane domains at high sterol concentrations. Interacts with PAQR3; the interaction anchors the SCAP-SREBP complex to the Golgi apparatus in low cholesterol conditions. Interacts with the SEC23-SEC24 complex in a SAR1-GTP-dependent manner through an ER export signal in its third cytoplasmic loop. Interacts with RNF139; the interaction inhibits the interaction of SCAP with SEC24B and hampering the ER to Golgi transport of the SCAP-SREBP complex. Interacts with SPRING1. In terms of processing, ubiquitinated at Lys-454 and Lys-466. RNF145 triggers ubiquitination of SCAP, likely inhibiting SCAP-SREBP complex transport to the Golgi apparatus and the subsequent processing/maturation of SREBF2/SREBP2. In terms of tissue distribution, widely expressed with higher levels in lung, kidney, gut, brain and adipose tissue. As to expression, expressed in liver and muscle. Isoform 3 expressed in testis. Expressed in testis.

The protein localises to the endoplasmic reticulum membrane. Its subcellular location is the golgi apparatus membrane. It localises to the cytoplasmic vesicle. It is found in the COPII-coated vesicle membrane. In terms of biological role, escort protein required for cholesterol as well as lipid homeostasis. Regulates export of the SCAP-SREBP complex from the endoplasmic reticulum to the Golgi upon low cholesterol, thereby regulating the processing of sterol regulatory element-binding proteins (SREBPs) SREBF1/SREBP1 and SREBF2/SREBP2. At high sterol concentrations, formation of a ternary complex with INSIG (INSIG1 or INSIG2) leads to mask the ER export signal in SCAP, promoting retention of the complex in the endoplasmic reticulum. Low sterol concentrations trigger release of INSIG, a conformational change in the SSD domain of SCAP, unmasking of the ER export signal, promoting recruitment into COPII-coated vesicles and transport of the SCAP-SREBP to the Golgi: in the Golgi, SREBPs are then processed, releasing the transcription factor fragment of SREBPs from the membrane, its import into the nucleus and up-regulation of LDLR, INSIG1 and the mevalonate pathway. Binds cholesterol via its SSD domain. In Sus scrofa (Pig), this protein is Sterol regulatory element-binding protein cleavage-activating protein.